We begin with the raw amino-acid sequence, 391 residues long: Carbamoyl phosphate synthase small chain (391 aa).

The CPSase stretch occupies residues methionine 1 to lysine 187. Residues serine 50, glycine 239, and glycine 241 each contribute to the L-glutamine site. The 186-residue stretch at arginine 191–alanine 376 folds into the Glutamine amidotransferase type-1 domain. Cysteine 266 (nucleophile) is an active-site residue. The L-glutamine site is built by leucine 267, glutamine 270, asparagine 308, glycine 310, and tyrosine 311. Active-site residues include histidine 349 and glutamate 351.

Belongs to the CarA family. Composed of two chains; the small (or glutamine) chain promotes the hydrolysis of glutamine to ammonia, which is used by the large (or ammonia) chain to synthesize carbamoyl phosphate. Tetramer of heterodimers (alpha,beta)4.

The enzyme catalyses hydrogencarbonate + L-glutamine + 2 ATP + H2O = carbamoyl phosphate + L-glutamate + 2 ADP + phosphate + 2 H(+). It carries out the reaction L-glutamine + H2O = L-glutamate + NH4(+). It functions in the pathway amino-acid biosynthesis; L-arginine biosynthesis; carbamoyl phosphate from bicarbonate: step 1/1. It participates in pyrimidine metabolism; UMP biosynthesis via de novo pathway; (S)-dihydroorotate from bicarbonate: step 1/3. Small subunit of the glutamine-dependent carbamoyl phosphate synthetase (CPSase). CPSase catalyzes the formation of carbamoyl phosphate from the ammonia moiety of glutamine, carbonate, and phosphate donated by ATP, constituting the first step of 2 biosynthetic pathways, one leading to arginine and/or urea and the other to pyrimidine nucleotides. The small subunit (glutamine amidotransferase) binds and cleaves glutamine to supply the large subunit with the substrate ammonia. In Thermus thermophilus (strain ATCC BAA-163 / DSM 7039 / HB27), this protein is Carbamoyl phosphate synthase small chain.